The chain runs to 259 residues: Short-chain dehydrogenase chry4 (259 aa).

Positions 37, 55, 81, 154, 158, 185, and 187 each coordinate NADP(+). Tyr-154 functions as the Proton donor in the catalytic mechanism. The Lowers pKa of active site Tyr role is filled by Lys-158.

This sequence belongs to the short-chain dehydrogenases/reductases (SDR) family.

It participates in pigment biosynthesis. Functionally, short-chain dehydrogenase; part of the gene cluster that mediates the biosynthesis of the yellow pigment chrysogine. Pyruvic acid and anthranilic acid are likely substrates for the nonribosomal peptide synthetase chry1/NRPS14, with pyruvic acid adenylated by the first A domain and anthranilic acid by the second. If pyruvic acid and anthranilic acid are merged and released from chry1/NRPS14 by hydrolysis, a subsequent amidation would lead to 2-pyruvoylaminobenzamide. This process is probably catalyzed by the amidotransferase chry2 using glutamine as amino donor. The dehydrogenase chry5 that has a terminal berberine bridge domain for C-N cyclization could catalyze the cyclization of 2-pyruvoylaminobenzamide to yield acetyl-4(3H)-quinazolidinone. A final reduction of acetyl-4(3H)-quinazolidinone catalyzed by the oxidoreductase chry4 would result in chrysogine. This chain is Short-chain dehydrogenase chry4, found in Gibberella zeae (strain ATCC MYA-4620 / CBS 123657 / FGSC 9075 / NRRL 31084 / PH-1) (Wheat head blight fungus).